Reading from the N-terminus, the 1038-residue chain is Type I restriction enzyme EcoR124I/EcoR124II endonuclease subunit (1038 aa).

The interval 31–249 (QSESDLEREL…LKDFTATCFQ (219 aa)) is nuclease domain. Positions 250-469 (KHTLLNVLVN…SYVITDAIRD (220 aa)) are motor 1 domain. Residues 294–439 (KNWSKPESGG…YQFGFTGTPI (146 aa)) form the Helicase ATP-binding domain. 307-314 (HTTGSGKT) serves as a coordination point for ATP. The DEAH box signature appears at 408–411 (DECH). The segment at 470 to 702 (EKVLKFKVDY…YDATKTFGNI (233 aa)) is motor 2 domain. Residues 720–732 (GDKNTKNVVLEKS) are motor 2-helicase linker. The segment at 732–860 (SYTEYMEGFT…NDIRDWQRRE (129 aa)) is helicase domain. Positions 859–886 (REKEAEKKEKSTTDWDDVVFEVDLLKSQ) are helicase-CTD linker. A C-terminal domain region spans residues 886-1038 (QEINLDYILG…EKFKGVGGKI (153 aa)).

The protein belongs to the HsdR family. In terms of assembly, a monomer in solution. The type I restriction/modification system is composed of three polypeptides R, M and S; the restriction enzyme has stoichiometry R(2)M(2)S(1) while the methyltransferase is M(2)S(1). There is an equilibrium between R(2)M(2)S(1) and R(1)M(2)S(1); the latter is methylation and translocation proficient but restriction deficient. As to quaternary structure, (Microbial infection) Holoenenzyme interacts with Escherichia phage T7 protein Ocr; this interaction leads to the inhibition of the restriction activity, but may still allow methylation and translocation.

The catalysed reaction is Endonucleolytic cleavage of DNA to give random double-stranded fragments with terminal 5'-phosphates, ATP is simultaneously hydrolyzed.. Its function is as follows. The restriction (R) subunit of a type I restriction enzyme that recognizes 5'-GAAN(6)RTCG-3' (for EcoR124I) and 5'-GAAN(7)RTCG-3' (for EcoR124II) and cleaves a random distance away. Subunit R is required for both nuclease and ATPase activities, but not for modification. After locating an unmethylated recognition site, the enzyme complex serves as a molecular motor that translocates DNA in an ATP-dependent manner until a collision occurs that triggers cleavage. The enzyme undergoes major structural changes to bring the motor domains into contact with DNA, allowing DNA translocation. This prevents DNA access to the catalytic domains of both the R and M subunits, preventing both restriction and methylation. The R(1)M(2)S(1) complex translocates an average of 555 bp/second on nicked DNA; the R(2)M(2)S(1) complex translocates at double that speed. The 2 R subunit motors are independent and track along the helical pitch of the DNA, inducing positive supercoiling ahead of themselves. This chain is Type I restriction enzyme EcoR124I/EcoR124II endonuclease subunit, found in Escherichia coli.